Here is a 428-residue protein sequence, read N- to C-terminus: Immunoglobulin superfamily containing leucine-rich repeat protein (428 aa).

An N-terminal signal peptide occupies residues 1-18 (MRALCLLCWAVLLNLVRA). The 32-residue stretch at 19 to 50 (CPEPCDCGEKYGFQIADCAYRDLEGVPPGFPA) folds into the LRRNT domain. N-linked (GlcNAc...) asparagine glycosylation occurs at Asn-51. 5 LRR repeats span residues 51–72 (NVTT…AFRE), 75–98 (LLQS…APLS), 99–122 (HLKS…HNLS), 123–144 (ALQL…AFSS), and 147–168 (ALRS…TFAP). Residues 180–231 (NPFDCTCGIVWFKTWALASAVSIPEQDNIACTTPHVLKGIPLGRLPPLPCSA) enclose the LRRCT domain. An Ig-like domain is found at 232–343 (PSVQLSYQPS…GSAESSVNVA (112 aa)). The cysteines at positions 257 and 327 are disulfide-linked. Residue Asn-309 is glycosylated (N-linked (GlcNAc...) asparagine).

As to expression, detected in thyroid, heart, retina and spinal cord.

The protein resides in the secreted. This chain is Immunoglobulin superfamily containing leucine-rich repeat protein (Islr), found in Mus musculus (Mouse).